Reading from the N-terminus, the 342-residue chain is MNKDLLLSSYDYTLANELIANYPTNPKEDARLLVFDRKNKEIFHTTFKNLQDFLPNCAIFFNDTKVIKARIYGNKASGGKIELFLHQPFLNSHDPLFLAQIKGRVKKDEILYFKDDLKVRVVELLNDGLRKVQFFQNDKTLDTSNLYNLLDKIGHIPLPPYIKREDEKSDLKDYQSIFAKNLGAVAAPTASLHFSETMLENLRKKHEIYHLTLHVGAGTFKSVECENIQEHKMHSEFFNIPQQACEIIDSKQAILGVGTTVTRTIEYYARTKTKNGFCDLFLHPQNPPIRQNHLLTNFHLPKSTLIMLVSAFIGREQCLKLYELAIKEKYRFYSYGDAMLIL.

The protein belongs to the QueA family. As to quaternary structure, monomer.

It is found in the cytoplasm. The enzyme catalyses 7-aminomethyl-7-carbaguanosine(34) in tRNA + S-adenosyl-L-methionine = epoxyqueuosine(34) in tRNA + adenine + L-methionine + 2 H(+). It functions in the pathway tRNA modification; tRNA-queuosine biosynthesis. Functionally, transfers and isomerizes the ribose moiety from AdoMet to the 7-aminomethyl group of 7-deazaguanine (preQ1-tRNA) to give epoxyqueuosine (oQ-tRNA). The chain is S-adenosylmethionine:tRNA ribosyltransferase-isomerase from Campylobacter jejuni (strain RM1221).